Consider the following 1194-residue polypeptide: IQ motif and SEC7 domain-containing protein 3 (1194 aa).

Residues 20-56 adopt a coiled-coil conformation; that stretch reads AIVQNQQSLIHTQRQRIDELERRLDELSAENRSLWEH. Disordered regions lie at residues 62-149 and 229-272; these read AQPP…EKER and GRPS…QQPA. Positions 63 to 78 are enriched in pro residues; it reads QPPPGLVPPPSAPLPA. A compositionally biased stretch (low complexity) spans 79–92; it reads PAATAPAATAAQEP. Residues 122 to 133 show a composition bias toward polar residues; it reads PSSRVQTPQSPH. S255 is modified (phosphoserine). The IQ domain maps to 311-340; it reads SRRAACTIQTAFRQYQLSKNFEKIRNSLLE. Disordered regions lie at residues 439-471 and 515-610; these read SAGQ…QGHS and PAAV…KSAK. Composition is skewed to low complexity over residues 561-572 and 600-610; these read VAEAVVEEAVAT and SSSSASTKSAK. Positions 646 to 839 constitute an SEC7 domain; the sequence is TLSTDTLRKR…VGIYERIQQK (194 aa). The region spanning 852 to 985 is the PH domain; that stretch reads TKVEKSIVGM…LKESIAEVTE (134 aa). Disordered stretches follow at residues 1002-1099 and 1137-1175; these read KTLS…PTPP and SSDS…HQFC. Over residues 1024-1035 the composition is skewed to basic and acidic residues; it reads AKREAMAGEKAT. Polar residues predominate over residues 1036–1052; the sequence is ESSGEVSIHNRLQTFQH. Pro residues-rich tracts occupy residues 1064–1099 and 1159–1169; these read APSP…PTPP and PPLPPPPPPYN.

The protein belongs to the BRAG family. In terms of assembly, interacts with DLG1 and DLG4. Interacts with GPHN. In terms of tissue distribution, expressed in brain. Localized to dendrites, as well as somas of neuronal cells.

The protein resides in the cytoplasm. The protein localises to the postsynaptic density. Functionally, acts as a guanine nucleotide exchange factor (GEF) for ARF1. This is IQ motif and SEC7 domain-containing protein 3 (Iqsec3) from Rattus norvegicus (Rat).